The chain runs to 133 residues: MNVIEQLRKEEADRLLAQRKVPEFRPGDTVRVNVRIKEGDRERVQAYEGVCIARAGQGVDENFTVRKISFGEGVERVFPILSPMIESIEVKRRGVVRRAKLYYLRDRRGKSARIAERQMTAASKEEPAEKSEA.

The tract at residues 114–133 is disordered; sequence IAERQMTAASKEEPAEKSEA. The span at 123-133 shows a compositional bias: basic and acidic residues; that stretch reads SKEEPAEKSEA.

The protein belongs to the bacterial ribosomal protein bL19 family.

Functionally, this protein is located at the 30S-50S ribosomal subunit interface and may play a role in the structure and function of the aminoacyl-tRNA binding site. The sequence is that of Large ribosomal subunit protein bL19 from Phenylobacterium zucineum (strain HLK1).